The sequence spans 142 residues: Alpha-lactalbumin (142 aa).

The N-terminal stretch at 1–19 is a signal peptide; that stretch reads MMSFVSLLLVGILFHATQA. In terms of domain architecture, C-type lysozyme spans 20–142; sequence EQLTKCEVFR…KLDQWLCEKL (123 aa). Cystine bridges form between cysteine 25/cysteine 139, cysteine 47/cysteine 130, cysteine 80/cysteine 96, and cysteine 92/cysteine 110. N-linked (GlcNAc...) asparagine glycans are attached at residues asparagine 64 and asparagine 93. Positions 98, 101, 103, 106, and 107 each coordinate Ca(2+).

This sequence belongs to the glycosyl hydrolase 22 family. In terms of assembly, lactose synthase (LS) is a heterodimer of a catalytic component, beta1,4-galactosyltransferase (beta4Gal-T1) and a regulatory component, alpha-lactalbumin (LA). In terms of tissue distribution, mammary gland specific. Secreted in milk.

It localises to the secreted. Regulatory subunit of lactose synthase, changes the substrate specificity of galactosyltransferase in the mammary gland making glucose a good acceptor substrate for this enzyme. This enables LS to synthesize lactose, the major carbohydrate component of milk. In other tissues, galactosyltransferase transfers galactose onto the N-acetylglucosamine of the oligosaccharide chains in glycoproteins. The sequence is that of Alpha-lactalbumin (LALBA) from Bos mutus grunniens (Wild yak).